We begin with the raw amino-acid sequence, 224 residues long: Phosphoribosylformylglycinamidine synthase subunit PurQ (224 aa).

Residues 2 to 224 (KVTILQFPGT…IKMLQGFLRA (223 aa)) form the Glutamine amidotransferase type-1 domain. The active-site Nucleophile is Cys86. Active-site residues include His200 and Glu202.

As to quaternary structure, part of the FGAM synthase complex composed of 1 PurL, 1 PurQ and 2 PurS subunits.

The protein localises to the cytoplasm. The catalysed reaction is N(2)-formyl-N(1)-(5-phospho-beta-D-ribosyl)glycinamide + L-glutamine + ATP + H2O = 2-formamido-N(1)-(5-O-phospho-beta-D-ribosyl)acetamidine + L-glutamate + ADP + phosphate + H(+). The enzyme catalyses L-glutamine + H2O = L-glutamate + NH4(+). It functions in the pathway purine metabolism; IMP biosynthesis via de novo pathway; 5-amino-1-(5-phospho-D-ribosyl)imidazole from N(2)-formyl-N(1)-(5-phospho-D-ribosyl)glycinamide: step 1/2. Part of the phosphoribosylformylglycinamidine synthase complex involved in the purines biosynthetic pathway. Catalyzes the ATP-dependent conversion of formylglycinamide ribonucleotide (FGAR) and glutamine to yield formylglycinamidine ribonucleotide (FGAM) and glutamate. The FGAM synthase complex is composed of three subunits. PurQ produces an ammonia molecule by converting glutamine to glutamate. PurL transfers the ammonia molecule to FGAR to form FGAM in an ATP-dependent manner. PurS interacts with PurQ and PurL and is thought to assist in the transfer of the ammonia molecule from PurQ to PurL. In Sulfurimonas denitrificans (strain ATCC 33889 / DSM 1251) (Thiomicrospira denitrificans (strain ATCC 33889 / DSM 1251)), this protein is Phosphoribosylformylglycinamidine synthase subunit PurQ.